The chain runs to 53 residues: Small, acid-soluble spore protein K (53 aa).

A disordered region spans residues 1–53 (MRNKEHNFPNQNNNKFEGEPRAKSEYASKRADGTTNTHPQERMRASGERSDFF). 2 stretches are compositionally biased toward basic and acidic residues: residues 16–32 (FEGE…KRAD) and 39–53 (PQER…SDFF).

It belongs to the SspK family.

The protein localises to the spore core. The protein is Small, acid-soluble spore protein K of Geobacillus thermodenitrificans (strain NG80-2).